A 257-amino-acid polypeptide reads, in one-letter code: Global transcriptional regulator CodY (257 aa).

Residues 1 to 155 (MSLLSKTREL…AATVIGMEIL (155 aa)) form a GAF domain region. Positions 203 to 222 (ASKVADRVGITRSVIVNALR) form a DNA-binding region, H-T-H motif.

Belongs to the CodY family.

The protein localises to the cytoplasm. Its function is as follows. DNA-binding global transcriptional regulator which is involved in the adaptive response to starvation and acts by directly or indirectly controlling the expression of numerous genes in response to nutrient availability. During rapid exponential growth, CodY is highly active and represses genes whose products allow adaptation to nutrient depletion. The sequence is that of Global transcriptional regulator CodY from Staphylococcus haemolyticus (strain JCSC1435).